A 266-amino-acid chain; its full sequence is Phosphate import ATP-binding protein PstB 2 (266 aa).

The region spanning 13–252 is the ABC transporter domain; that stretch reads LEAQGVNVYY…GPTEEIFQNP (240 aa). ATP is bound at residue 45–52; it reads GPSGCGKS.

The protein belongs to the ABC transporter superfamily. Phosphate importer (TC 3.A.1.7) family. In terms of assembly, the complex is composed of two ATP-binding proteins (PstB), two transmembrane proteins (PstC and PstA) and a solute-binding protein (PstS).

Its subcellular location is the cell inner membrane. It catalyses the reaction phosphate(out) + ATP + H2O = ADP + 2 phosphate(in) + H(+). Its function is as follows. Part of the ABC transporter complex PstSACB involved in phosphate import. Responsible for energy coupling to the transport system. The protein is Phosphate import ATP-binding protein PstB 2 of Synechocystis sp. (strain ATCC 27184 / PCC 6803 / Kazusa).